We begin with the raw amino-acid sequence, 202 residues long: Small ribosomal subunit protein uS4 (202 aa).

Residues 1–13 are compositionally biased toward basic residues; it reads MSRYRGPRLRVTR. Residues 1–42 are disordered; sequence MSRYRGPRLRVTRRLGELPGLTRKASKKSNPPGQHGQARRKR. The S4 RNA-binding domain maps to 90-152; that stretch reads NRLDNVCFRL…KASKKLVEGN (63 aa).

It belongs to the universal ribosomal protein uS4 family. In terms of assembly, part of the 30S ribosomal subunit. Contacts protein S5. The interaction surface between S4 and S5 is involved in control of translational fidelity.

Functionally, one of the primary rRNA binding proteins, it binds directly to 16S rRNA where it nucleates assembly of the body of the 30S subunit. With S5 and S12 plays an important role in translational accuracy. The sequence is that of Small ribosomal subunit protein uS4 from Prochlorococcus marinus subsp. pastoris (strain CCMP1986 / NIES-2087 / MED4).